A 427-amino-acid chain; its full sequence is Glutamate-1-semialdehyde 2,1-aminomutase (427 aa).

Lys-267 is modified (N6-(pyridoxal phosphate)lysine).

The protein belongs to the class-III pyridoxal-phosphate-dependent aminotransferase family. HemL subfamily. Homodimer. The cofactor is pyridoxal 5'-phosphate.

It localises to the cytoplasm. It catalyses the reaction (S)-4-amino-5-oxopentanoate = 5-aminolevulinate. It participates in porphyrin-containing compound metabolism; protoporphyrin-IX biosynthesis; 5-aminolevulinate from L-glutamyl-tRNA(Glu): step 2/2. The protein is Glutamate-1-semialdehyde 2,1-aminomutase of Geobacter metallireducens (strain ATCC 53774 / DSM 7210 / GS-15).